A 573-amino-acid polypeptide reads, in one-letter code: PCNA-interacting partner (573 aa).

The tract at residues 463–511 is disordered; it reads VSEGAQPSVGKARLETSSENVHVDRSKDDKGPRKSTKRKLAKSKQPGVR. Over residues 474 to 494 the composition is skewed to basic and acidic residues; sequence ARLETSSENVHVDRSKDDKGP. Positions 495-504 are enriched in basic residues; that stretch reads RKSTKRKLAK.

Belongs to the PARI family. In terms of assembly, interacts with RAD51 and PCNA. Interacts with PARP1. Interacts with TASOR. In terms of tissue distribution, present in testis (at protein level). Expressed in testis, gastrointestinal tract (jejunum, ileum, and colon) and immune system (thymus and spleen). Weakly expressed in lung, kidney, pituitary gland and muscle.

It localises to the cytoplasm. Its subcellular location is the nucleus. Required to suppress inappropriate homologous recombination, thereby playing a central role DNA repair and in the maintenance of genomic stability. Antagonizes homologous recombination by interfering with the formation of the RAD51-DNA homologous recombination structure. Positively regulate the poly(ADP-ribosyl)ation activity of PARP1; however such function may be indirect. Binds single-strand DNA and poly(A) homopolymers. The polypeptide is PCNA-interacting partner (Parpbp) (Rattus norvegicus (Rat)).